Here is a 306-residue protein sequence, read N- to C-terminus: Dermonecrotic toxin LiSicTox-alphaIA1bi (306 aa).

An N-terminal signal peptide occupies residues 1-18 (MLPYIVLVLGCWSVLSQA). Positions 19–26 (AQTDDEER) are excised as a propeptide. His38 is a catalytic residue. Residues Glu58 and Asp60 each coordinate Mg(2+). Catalysis depends on His74, which acts as the Nucleophile. Intrachain disulfides connect Cys78–Cys84 and Cys80–Cys223. Mg(2+) is bound at residue Asp118.

The protein belongs to the arthropod phospholipase D family. Class II subfamily. Class IIa sub-subfamily. Requires Mg(2+) as cofactor. In terms of tissue distribution, expressed by the venom gland.

It is found in the secreted. It carries out the reaction an N-(acyl)-sphingosylphosphocholine = an N-(acyl)-sphingosyl-1,3-cyclic phosphate + choline. It catalyses the reaction an N-(acyl)-sphingosylphosphoethanolamine = an N-(acyl)-sphingosyl-1,3-cyclic phosphate + ethanolamine. The catalysed reaction is a 1-acyl-sn-glycero-3-phosphocholine = a 1-acyl-sn-glycero-2,3-cyclic phosphate + choline. The enzyme catalyses a 1-acyl-sn-glycero-3-phosphoethanolamine = a 1-acyl-sn-glycero-2,3-cyclic phosphate + ethanolamine. Dermonecrotic toxins cleave the phosphodiester linkage between the phosphate and headgroup of certain phospholipids (sphingolipid and lysolipid substrates), forming an alcohol (often choline) and a cyclic phosphate. This toxin acts on sphingomyelin (SM). The level of enzymatic activity is high according to Tambourgi and colleagues or low according to Felicori and colleagues. It may also act on ceramide phosphoethanolamine (CPE), lysophosphatidylcholine (LPC) and lysophosphatidylethanolamine (LPE), but not on lysophosphatidylserine (LPS), and lysophosphatidylglycerol (LPG). It acts by transphosphatidylation, releasing exclusively cyclic phosphate products as second products. It induces complement-dependent hemolysis, dermonecrosis, vascular permeability and platelet aggregation. Both C5a and the membrane attack complex may play a role in the induction of dermonecrosis. MMP-9 and MMP-2 produced by skin fibroblasts can also contribute to proteolytic tissue destruction. This chain is Dermonecrotic toxin LiSicTox-alphaIA1bi, found in Loxosceles intermedia (Brown spider).